The sequence spans 418 residues: Delta(14)-sterol reductase TM7SF2 (418 aa).

A run of 6 helical transmembrane segments spans residues 13 to 35 (FGGP…HLLL), 62 to 81 (ALLL…LLPA), 102 to 124 (GFQA…LPLS), 129 to 148 (MLLP…SLLL), 255 to 277 (FGFM…QAQF), and 287 to 304 (WPLA…YYIF). NADP(+) is bound by residues Lys-311, Arg-315, Leu-338, Trp-343, and 350–351 (NY). Residues 355 to 377 (LIMALAWSLPCGVFHLLPYFYFL) form a helical membrane-spanning segment. Residues Asp-390, 394–398 (CRQKY), and Tyr-405 each bind NADP(+).

The protein belongs to the ERG4/ERG24 family. In terms of tissue distribution, highly expressed in liver and brain.

It is found in the microsome membrane. Its subcellular location is the endoplasmic reticulum membrane. It catalyses the reaction 4,4-dimethyl-5alpha-cholesta-8,24-dien-3beta-ol + NADP(+) = 4,4-dimethyl-5alpha-cholesta-8,14,24-trien-3beta-ol + NADPH + H(+). The enzyme catalyses 5alpha-cholest-8,14-dien-3beta-ol + NADPH + H(+) = 5alpha-cholest-8-en-3beta-ol + NADP(+). The catalysed reaction is 4,4-dimethyl-8,14-cholestadien-3beta-ol + NADPH + H(+) = 4,4-dimethyl-5alpha-cholest-8-en-3beta-ol + NADP(+). Its pathway is steroid biosynthesis; cholesterol biosynthesis. In terms of biological role, catalyzes the reduction of the C14-unsaturated bond of lanosterol, as part of the metabolic pathway leading to cholesterol biosynthesis. This is Delta(14)-sterol reductase TM7SF2 (TM7SF2) from Bos taurus (Bovine).